The sequence spans 79 residues: RNA-binding protein Hfq (79 aa).

Positions 10–69 (DPFLNALRKEHVPVSIYLVNGIKLQGNIESFDQYVVLLRNTVTQMVYKHAISTVVPARAV) constitute a Sm domain.

Belongs to the Hfq family. As to quaternary structure, homohexamer.

Functionally, RNA chaperone that binds small regulatory RNA (sRNAs) and mRNAs to facilitate mRNA translational regulation in response to envelope stress, environmental stress and changes in metabolite concentrations. Also binds with high specificity to tRNAs. The chain is RNA-binding protein Hfq from Ralstonia nicotianae (strain ATCC BAA-1114 / GMI1000) (Ralstonia solanacearum).